We begin with the raw amino-acid sequence, 197 residues long: Cerebellin-3 (197 aa).

Positions 1 to 24 are cleaved as a signal peptide; the sequence is MGTEWHKPKLSLALVLLTLEAGWA. Residues 59–197 form the C1q domain; sequence APPGRVAFAA…SFSGFLIFPL (139 aa). The interval 64–197 is necessary for interaction with CBLN3, and homotrimerization; that stretch reads VAFAAVRSHH…SFSGFLIFPL (134 aa). Asn82 carries an N-linked (GlcNAc...) asparagine glycan.

In terms of assembly, heterohexamer; disulfide-linked heterotrimers. Interacts with CBLN1. May also form oligomers with CBLN2 and CBLN4. As to expression, expressed in brain, restricted to the cerebellar cortex. Within the cerebellum, expressed in granule layers (at protein level). Also detected in postsynaptic Purkinje cell spines (at protein level).

It localises to the endoplasmic reticulum. Its subcellular location is the golgi apparatus. The protein localises to the cis-Golgi network. It is found in the secreted. The protein resides in the synapse. Functionally, may be involved in synaptic functions in the CNS. The protein is Cerebellin-3 (Cbln3) of Mus musculus (Mouse).